Consider the following 71-residue polypeptide: UPF0346 protein SPP_0954 (71 aa).

It belongs to the UPF0346 family.

This chain is UPF0346 protein SPP_0954, found in Streptococcus pneumoniae (strain P1031).